We begin with the raw amino-acid sequence, 222 residues long: U-scoloptoxin(11)-Sm5a (222 aa).

It belongs to the scoloptoxin-11 family. Post-translationally, contains 8 disulfide bonds. In terms of tissue distribution, expressed by the venom gland.

It localises to the secreted. This chain is U-scoloptoxin(11)-Sm5a, found in Scolopendra morsitans (Tanzanian blue ringleg centipede).